The primary structure comprises 494 residues: BTB/POZ domain and ankyrin repeat-containing protein NH5.1 (494 aa).

Residues 25-130 form the BTB domain; that stretch reads SDVAFSVEGR…LYSGQASVAA (106 aa). The disordered stretch occupies residues 60–94; that stretch reads NHQPPPPPPPLNWPMAGGGGGGSGGGGRGGAGGGG. Over residues 61 to 71 the composition is skewed to pro residues; it reads HQPPPPPPPLN. Positions 75 to 94 are enriched in gly residues; that stretch reads AGGGGGGSGGGGRGGAGGGG. The C2HC NPR-type zinc finger occupies 136 to 150; sequence LPGCGARGCWHTRCG. Positions 139, 144, 146, and 149 each coordinate Zn(2+). ANK repeat units follow at residues 274–302, 303–333, 338–367, and 371–405; these read NKIR…GLDL, DDAL…DVNS, TGKT…DPNS, and DGVT…KLRL. 2 disordered regions span residues 421–443 and 469–494; these read DGAP…PRSD and AAGE…NGFA.

Belongs to the plant 'ANKYRIN-BTB/POZ' family. 'NOOT-BOP-COCH-like' (NBCL) subfamily. Homodimer. Interacts with TGAL5, TGAL7, TGAL8 and TGAL9.

Its subcellular location is the nucleus. The protein resides in the cytoplasm. It functions in the pathway protein modification; protein ubiquitination. In terms of biological role, may act as a substrate-specific adapter of an E3 ubiquitin-protein ligase complex (CUL3-RBX1-BTB) which mediates the ubiquitination and subsequent proteasomal degradation of target proteins. Transcriptional co-regulator involved in the promotion of leaf and floral meristem fate and determinacy. Required for the abscission of senescent organs, probably by regulating the cell wall disorganization in abscission zones (AZs, e.g. pulvini at the base of leaves). This Oryza sativa subsp. japonica (Rice) protein is BTB/POZ domain and ankyrin repeat-containing protein NH5.1.